The following is a 103-amino-acid chain: Large ribosomal subunit protein uL23 (103 aa).

It belongs to the universal ribosomal protein uL23 family. In terms of assembly, part of the 50S ribosomal subunit. Contacts protein L29, and trigger factor when it is bound to the ribosome.

One of the early assembly proteins it binds 23S rRNA. One of the proteins that surrounds the polypeptide exit tunnel on the outside of the ribosome. Forms the main docking site for trigger factor binding to the ribosome. This Zymomonas mobilis subsp. mobilis (strain ATCC 31821 / ZM4 / CP4) protein is Large ribosomal subunit protein uL23.